The chain runs to 1390 residues: Nuclear pore complex protein Nup155 (1390 aa).

O-linked (GlcNAc) serine glycosylation is present at Ser525. Positions 598 to 632 (GSPMYSSSPVPTGSPYPNPSSLGTPSHGAQPPTMS) are disordered. Lys739 participates in a covalent cross-link: Glycyl lysine isopeptide (Lys-Gly) (interchain with G-Cter in SUMO2). The segment at 984–1011 (QSKAAPQSPSVPKKPGPPVLSSDPNMLS) is disordered. The residue at position 1056 (Ser1056) is a Phosphoserine.

This sequence belongs to the non-repetitive/WGA-negative nucleoporin family. As to quaternary structure, interacts with GLE1. Able to form a heterotrimer with GLE1 and NUP42 in vitro. Forms a complex with NUP35, NUP93, NUP205 and lamin B. Phosphorylated. Phosphorylation and dephosphorylation may be important for the function of NUP155 and may play a role in the reversible disassembly of the nuclear pore complex during mitosis. Post-translationally, disulfide-linked to NUP62. The inner channel of the NPC has a different redox environment from the cytoplasm and allows the formation of interchain disulfide bonds between some nucleoporins, the significant increase of these linkages upon oxidative stress reduces the permeability of the NPC.

The protein localises to the nucleus. It localises to the nuclear pore complex. The protein resides in the nucleus membrane. Essential component of nuclear pore complex. Could be essessential for embryogenesis. Nucleoporins may be involved both in binding and translocating proteins during nucleocytoplasmic transport. This chain is Nuclear pore complex protein Nup155 (Nup155), found in Rattus norvegicus (Rat).